The following is a 35-amino-acid chain: ACLGFGKSCNPSNDQCCKSSSLACSTKHKWCKYEL.

Intrachain disulfides connect cysteine 2–cysteine 17, cysteine 9–cysteine 24, and cysteine 16–cysteine 31.

Belongs to the neurotoxin 10 (Hwtx-1) family. 22 (Htx-4) subfamily. As to expression, expressed by the venom gland.

Its subcellular location is the secreted. Gating-modifier toxin that reversibly and voltage-independently inhibits human Nav1.1/SCN1A and Nav1.7/SCN9A (IC(50)=111 nM). It also shows moderate inhibition on Nav1.2/SCN2A (1 uM inhibits current by 55%), Nav1.6/SCN8A (31%), Nav1.3/SCN5A (27%) and Nav1.4/SCN4A (23%). This toxin inhibits Nav1.7/SCN9A by interacting with the S3b-S4 paddle motif in channel domain II. This Cyriopagopus doriae (Tarantula spider) protein is Mu-theraphotoxin-Hd1a.